A 943-amino-acid chain; its full sequence is Isoleucine--tRNA ligase (943 aa).

Residues 58-68 carry the 'HIGH' region motif; it reads PYANGTIHIGH. Glu-567 is an L-isoleucyl-5'-AMP binding site. The 'KMSKS' region motif lies at 608–612; that stretch reads KMSKS. ATP is bound at residue Lys-611. 4 residues coordinate Zn(2+): Cys-906, Cys-909, Cys-926, and Cys-929.

Belongs to the class-I aminoacyl-tRNA synthetase family. IleS type 1 subfamily. Monomer. Zn(2+) serves as cofactor.

It localises to the cytoplasm. It catalyses the reaction tRNA(Ile) + L-isoleucine + ATP = L-isoleucyl-tRNA(Ile) + AMP + diphosphate. Catalyzes the attachment of isoleucine to tRNA(Ile). As IleRS can inadvertently accommodate and process structurally similar amino acids such as valine, to avoid such errors it has two additional distinct tRNA(Ile)-dependent editing activities. One activity is designated as 'pretransfer' editing and involves the hydrolysis of activated Val-AMP. The other activity is designated 'posttransfer' editing and involves deacylation of mischarged Val-tRNA(Ile). This Pseudomonas fluorescens (strain SBW25) protein is Isoleucine--tRNA ligase.